The primary structure comprises 236 residues: Peptidase E (236 aa).

Active-site charge relay system residues include serine 122, aspartate 137, and histidine 159.

It belongs to the peptidase S51 family.

The protein localises to the cytoplasm. It carries out the reaction Dipeptidase E catalyzes the hydrolysis of dipeptides Asp-|-Xaa. It does not act on peptides with N-terminal Glu, Asn or Gln, nor does it cleave isoaspartyl peptides.. Its function is as follows. Hydrolyzes dipeptides containing N-terminal aspartate residues. May play a role in allowing the cell to use peptide aspartate to spare carbon otherwise required for the synthesis of the aspartate family of amino acids. This chain is Peptidase E, found in Shewanella oneidensis (strain ATCC 700550 / JCM 31522 / CIP 106686 / LMG 19005 / NCIMB 14063 / MR-1).